A 72-amino-acid polypeptide reads, in one-letter code: DNA-directed RNA polymerase subunit omega (72 aa).

The protein belongs to the RNA polymerase subunit omega family. As to quaternary structure, the RNAP catalytic core consists of 2 alpha, 1 beta, 1 beta' and 1 omega subunit. When a sigma factor is associated with the core the holoenzyme is formed, which can initiate transcription.

It carries out the reaction RNA(n) + a ribonucleoside 5'-triphosphate = RNA(n+1) + diphosphate. Functionally, promotes RNA polymerase assembly. Latches the N- and C-terminal regions of the beta' subunit thereby facilitating its interaction with the beta and alpha subunits. The chain is DNA-directed RNA polymerase subunit omega from Petrotoga mobilis (strain DSM 10674 / SJ95).